The chain runs to 1271 residues: MSYKTVKYGKKAERRDYSKMLHQVELPNLIEIQTKSFEEFVETGIDELLKDISPIEGHNGDLKLYFEESSLSEPKYSTIETKIRDLNYSRQLSARVKLENAITGEVRESTVLMTDLPMMTPSGTFIINGAERVVVSQIVRSSGVYYTSELDKKINQIKYSAQVIPTRGAWIEFEQGSKEILYAKLDRSKKVPLTTFIRALGFTTKKDIEETFGRSSLITNTFEKDETKSPNEAVIDLYSKLRQGEKVPADAAREFIRMRLFDARRYDLAKVGRYKFIKKLDVLARAEGTYLANDIILDGEVLVAKDTHLTKEVIQILAQNRDAFRKQLITKENNLQNETADEILATTLPEGGNTLYAKENVVNLKTGEVLVKKNEAITEEVLTNLRKNRHSIDEKVIKYFLTEDVYKKESLRQGVISEILDVYVYDDAGDKSNVIRIIGSDQREDRIFVAVSDIVASISYFLNLYDGLGNVDDIDHLGNRRLRLIGELLKNQFRIGLARAEKNIKDKMSTTNFNDATPANVINMTPLVGAIKTFFGSSQLSQFMDQINPLAELTQKRRVSALGTGGIARDRAGVEVRDVHNSHYGRLCPIETPEGPSIGLISSLATYAKVDEYGFIKTPFLKVVQNGNETSVTKEVIYLTADEESDHVIASAATPMDEHGLFIESRVIARRNGETGIYDANEITAMDVSPKQVVSVATSSIPFLEHDDASRALMGANMQRQAVPLLQPTSPIVGTGVEYRAAKDSGAVVIAKNSGYVTYVDGKKIIITPEPTDTIKSGSKTLYKVGGEFDYGIAKKLYETKSVQNDQYDLVQFFRSNQDTLILQKPIVMQGEYVDAGDVIADGPSTENGELALGRNVTVAFMTWEGYNYEDAVIMSEDLVKHDVYTSIHIDEYEIETRDLKQANGKEEITREIPNVGQEAIKFLDERGIIVPGSEVKEGDILVGKITPKGVFEPTPSEKLIHAVIGDKAKEYRDSSLRVPHGGGGVVQSVQYFSKKNGDQLPTGVNEQIRVYIAKKRKITEGDKMAGRHGNKGVISKILPREDMPYLADGTYVDIMLNPLGVPSRMNIGQILEIHLGISAQKLGIKVASPVFDGVTNDELGAIMEEAGIAPDGKTTLYDGRTGEPYNNRISVGVMYMIKLSHMVDDKLHARNVGPYTLVTQQPMGGKAQNGGQRFGEMEVWALYAYGAAHTLQEMLTIKSDDMIGRNKVYYAITHGQEIPKASIPESFRVLTRELQALGLYVELIDANKGENEAIKSLVDNSSKGFNKGRF.

Belongs to the RNA polymerase beta chain family. As to quaternary structure, the RNAP catalytic core consists of 2 alpha, 1 beta, 1 beta' and 1 omega subunit. When a sigma factor is associated with the core the holoenzyme is formed, which can initiate transcription.

It carries out the reaction RNA(n) + a ribonucleoside 5'-triphosphate = RNA(n+1) + diphosphate. Its function is as follows. DNA-dependent RNA polymerase catalyzes the transcription of DNA into RNA using the four ribonucleoside triphosphates as substrates. This is DNA-directed RNA polymerase subunit beta from Acholeplasma laidlawii (strain PG-8A).